A 170-amino-acid polypeptide reads, in one-letter code: ATP synthase subunit b (170 aa).

Residues 30–50 (FFFVLAIFLVVLGVIGTFVVP) traverse the membrane as a helical segment.

This sequence belongs to the ATPase B chain family. F-type ATPases have 2 components, F(1) - the catalytic core - and F(0) - the membrane proton channel. F(1) has five subunits: alpha(3), beta(3), gamma(1), delta(1), epsilon(1). F(0) has three main subunits: a(1), b(2) and c(10-14). The alpha and beta chains form an alternating ring which encloses part of the gamma chain. F(1) is attached to F(0) by a central stalk formed by the gamma and epsilon chains, while a peripheral stalk is formed by the delta and b chains.

The protein localises to the cell membrane. Functionally, f(1)F(0) ATP synthase produces ATP from ADP in the presence of a proton or sodium gradient. F-type ATPases consist of two structural domains, F(1) containing the extramembraneous catalytic core and F(0) containing the membrane proton channel, linked together by a central stalk and a peripheral stalk. During catalysis, ATP synthesis in the catalytic domain of F(1) is coupled via a rotary mechanism of the central stalk subunits to proton translocation. Its function is as follows. Component of the F(0) channel, it forms part of the peripheral stalk, linking F(1) to F(0). The sequence is that of ATP synthase subunit b from Mycobacterium leprae (strain TN).